The sequence spans 347 residues: Monopolin complex subunit LRS4 (347 aa).

Residues 46–118 (KKVVDETLFL…QISVDKHNKE (73 aa)) adopt a coiled-coil conformation. The segment covering 112-130 (VDKHNKERTPSTGRDEQQR) has biased composition (basic and acidic residues). Disordered regions lie at residues 112–183 (VDKH…SLLS) and 208–230 (RNDT…LQKS). Composition is skewed to polar residues over residues 131–140 (NSKAAHTSKP) and 155–172 (NNQT…PTSQ). S168 and S230 each carry phosphoserine.

Component of the monopolin complex composed of at least CSM1, LRS4 and MAM1. The complex associates with the kinetochore. In terms of processing, phosphorylated by CDC5. This phosphorylation is required for the location to the kinetochores during late pachytene.

Its subcellular location is the nucleus. It is found in the nucleolus. It localises to the chromosome. The protein resides in the centromere. Component of the monopolin complex which promotes monoorientation during meiosis I, required for chromosome segregation during meiosis. Involved in rDNA silencing. The chain is Monopolin complex subunit LRS4 (LRS4) from Saccharomyces cerevisiae (strain ATCC 204508 / S288c) (Baker's yeast).